Here is a 568-residue protein sequence, read N- to C-terminus: Estrogen receptor beta (568 aa).

The modulating stretch occupies residues 1–177 (MHQQSPVDDV…SLRGKADMHY (177 aa)). NR C4-type zinc fingers lie at residues 178–198 (CAVCSDYASGYHYGVWSCEGC) and 214–238 (CPATNQCTIDKNRRKSCQACRLRKC). The nuclear receptor DNA-binding region spans 178 to 243 (CAVCSDYASG…RLRKCYEVGM (66 aa)). The NR LBD domain occupies 300 to 536 (TPEELIARIM…DLLLEMLDAH (237 aa)).

The protein belongs to the nuclear hormone receptor family. NR3 subfamily. Binds DNA as a homodimer. Can form a heterodimer with ER-alpha.

The protein resides in the nucleus. In terms of biological role, binds estrogens with an affinity similar to that of ER-alpha, and activates expression of reporter genes containing estrogen response elements (ERE) in an estrogen-dependent manner. This chain is Estrogen receptor beta (esr2), found in Oncorhynchus mykiss (Rainbow trout).